A 373-amino-acid polypeptide reads, in one-letter code: Extensin-1 (373 aa).

The signal sequence occupies residues 1-19 (MASFLVLAFSLAFVSQTTA). 36 consecutive repeat copies span residues 25–33 (SPPPPVKHY), 34–40 (SPPPVYK), 41–49 (SPPPPVKHY), 50–56 (SPPPVYK), 57–65 (SPPPPVKHY), 66–72 (SPPPVYK), 73–81 (SPPPPVKYY), 82–88 (SPPPVYK), 97–105 (SPPPPVKHY), 106–112 (SPPPVYK), 113–121 (SPPPPVKHY), 122–128 (SPPPVYK), 129–137 (SPPPPVKHY), 138–144 (SPPPVYK), 145–153 (SPPPPVKHY), 154–160 (SPPPVYK), 161–169 (SPPPPVKYY), 170–176 (SPPPVYK), 177–185 (SPPPPVKHY), 186–192 (SPPPVYK), 193–201 (SPPPPVKYY), 202–208 (SPPPVYK), 209–217 (SPPPPVKHY), 218–224 (SPPPVYK), 225–233 (SPPPPVKYY), 234–240 (SPPPVYK), 241–248 (SPPPPVHY), 249–256 (SPPPVVYH), 257–264 (SPPPPVHY), 265–272 (SPPPVVYH), 273–280 (SPPPPVHY), 281–288 (SPPPVVYH), 289–296 (SPPPPVHY), 297–304 (SPPPVVYH), 305–312 (SPPPPVHY), and 313–320 (SPPPVVYH). The 13 X 9 AA repeats of S-P-P-P-P-V-K-[HY]-Y stretch occupies residues 25–233 (SPPPPVKHYS…KSPPPPVKYY (209 aa)). A 13 X 7 AA repeats of S-P-P-P-V-Y-K region spans residues 34–240 (SPPPVYKSPP…KYYSPPPVYK (207 aa)). Positions 241–312 (SPPPPVHYSP…YHSPPPPVHY (72 aa)) are 5 X 8 AA repeats of S-P-P-P-P-V-H-Y. The tract at residues 249–320 (SPPPVVYHSP…HYSPPPVVYH (72 aa)) is 5 X 8 AA repeats of S-P-P-P-V-V-Y-H. Isodityrosine cross-linking regions lie at residues 329-332 (YEYK) and 363-366 (YLYK). The tract at residues 349–373 (PPPPVHHYSPPHQPYLYKSPPPPHY) is disordered.

The protein belongs to the extensin family. In terms of processing, extensins contain a characteristic repeat of the pentapeptide Ser-Pro(4). For this particular extensin, a typical repeat of Ser-Pro(3) is found. In both cases, the proline residues are hydroxylated and then O-glycosylated (arabinosylation). Post-translationally, synthetised as soluble proteins which become insolubilised in the cell wall through the intermolecular cross-linking of Tyr on adjacent monomers. Isodityrosine (IDT) stabilizes and makes rigid the part of the polypeptide where IDT functional sites are present. In terms of tissue distribution, predominantly expressed in the roots. Not detected in the leaves, nor in flowers or flower buds. Wounding reverses this pattern, turning on the gene in the leaves and repressing it in the roots.

Its subcellular location is the secreted. It is found in the primary cell wall. Structural component which strengthens the primary cell wall. The chain is Extensin-1 from Arabidopsis thaliana (Mouse-ear cress).